Reading from the N-terminus, the 880-residue chain is MSSNPQHLSGNEIRTRFLDFYAQRGHQILASASLVPEDPTVLLTIAGMLPFKPIFLGQRTPEFKRATTSQKCIRTNDIENVGRTKRHQTFFEMLGNFSFGDYFKEQAIAWGWEISTEVFGLPKERLVVSVFEEDDEAYAIWRDQIGVTEARIKRMGADDNFWVSGPTGPCGPCSEIYYDFHPERGDDNIDLEDDTRFIEFYNLVFMQYNRDASGNLTPLQNKNIDTGMGLERITQILQRVPNNYETDLIFPIIETAAKIAGIDYHSSDESTKVSLKVIGDHVRSVVHMIADEIRASNVGRGYVLRRLIRRVVRHGRLIGISGEFINQVAETAIALSESAYPNVRQRETVIKAELEREEANFLKTLDRGEKLLAEIIAEVKKQGKTVISGKDAFTLYDTHGFPLELTQEIAEENNLTVDVEGFQKQMEIQQQGGRGAHETIDLTVQGSLDKLAEHIHATEFIGYSQATATAKVEVLLVDGVVQEEAEAGTEVQIVLDETPFYAESGGQIGDRGYISGDGIVVQVEDVKKESDFFVHFGRIERGTLRVGDNVTAQIDRAGRRRAQANHTATHLLQAALKTIVDGGISQAGSLVSFDRLRFDFNSPRGLTVEEIQQVEEQINTWIAEAHSAKIELLPLAEAKARGAVAMFGEKYGDEVRVIDFPGVSMELCGGTHVSNTAEIGVFKIISEAGVASGVRRIEAVSGLAVLDYLNVRDKVVKDLSDRFKVKPEELPERITTLQNELRTTEKQLETLKGQLAIAKSDSLLQTADTCGDYKIIVAQLEGVDPESLKSAAERLLQKIGNGAVVLGSVPEADKVSLVAAFSPEVNKKGLQAGKFIGAIAKICGGGGGGRPNLAQAGGRDASKLPAALEQAQSELKSALG.

The Zn(2+) site is built by H566, H570, C668, and H672.

It belongs to the class-II aminoacyl-tRNA synthetase family. The cofactor is Zn(2+).

The protein localises to the cytoplasm. The enzyme catalyses tRNA(Ala) + L-alanine + ATP = L-alanyl-tRNA(Ala) + AMP + diphosphate. Functionally, catalyzes the attachment of alanine to tRNA(Ala) in a two-step reaction: alanine is first activated by ATP to form Ala-AMP and then transferred to the acceptor end of tRNA(Ala). Also edits incorrectly charged Ser-tRNA(Ala) and Gly-tRNA(Ala) via its editing domain. In Nostoc sp. (strain PCC 7120 / SAG 25.82 / UTEX 2576), this protein is Alanine--tRNA ligase.